Consider the following 372-residue polypeptide: UDP-N-acetylglucosamine--N-acetylmuramyl-(pentapeptide) pyrophosphoryl-undecaprenol N-acetylglucosamine transferase (372 aa).

UDP-N-acetyl-alpha-D-glucosamine is bound by residues 21–23 (TAG), Asn135, Arg172, Ser206, and Gln303.

It belongs to the glycosyltransferase 28 family. MurG subfamily.

It is found in the cell membrane. The enzyme catalyses di-trans,octa-cis-undecaprenyl diphospho-N-acetyl-alpha-D-muramoyl-L-alanyl-D-glutamyl-meso-2,6-diaminopimeloyl-D-alanyl-D-alanine + UDP-N-acetyl-alpha-D-glucosamine = di-trans,octa-cis-undecaprenyl diphospho-[N-acetyl-alpha-D-glucosaminyl-(1-&gt;4)]-N-acetyl-alpha-D-muramoyl-L-alanyl-D-glutamyl-meso-2,6-diaminopimeloyl-D-alanyl-D-alanine + UDP + H(+). Its pathway is cell wall biogenesis; peptidoglycan biosynthesis. In terms of biological role, cell wall formation. Catalyzes the transfer of a GlcNAc subunit on undecaprenyl-pyrophosphoryl-MurNAc-pentapeptide (lipid intermediate I) to form undecaprenyl-pyrophosphoryl-MurNAc-(pentapeptide)GlcNAc (lipid intermediate II). This chain is UDP-N-acetylglucosamine--N-acetylmuramyl-(pentapeptide) pyrophosphoryl-undecaprenol N-acetylglucosamine transferase, found in Paenarthrobacter aurescens (strain TC1).